The chain runs to 579 residues: Probable pectinesterase/pectinesterase inhibitor 7 (579 aa).

An N-terminal signal peptide occupies residues 1-20 (MESPIFILITLSFFLQSVLA). The segment at 22–185 (SQTLSNSSTI…TKLLGVSLAL (164 aa)) is pectinesterase inhibitor 7. 8 N-linked (GlcNAc...) asparagine glycosylation sites follow: N27, N115, N174, N274, N277, N287, N326, and N333. The segment at 265–564 (VTVSQDGTGN…TVTGLFIEAD (300 aa)) is pectinesterase 7. T342 lines the substrate pocket. A glycan (N-linked (GlcNAc...) asparagine) is linked at N359. Q372 serves as a coordination point for substrate. D395 serves as the catalytic Proton donor; for pectinesterase activity. An intrachain disulfide couples C409 to C429. D416 acts as the Nucleophile; for pectinesterase activity in catalysis. N-linked (GlcNAc...) asparagine glycosylation is found at N462 and N475. Positions 484 and 486 each coordinate substrate. N-linked (GlcNAc...) asparagine glycosylation is found at N526, N533, N547, and N553.

The protein in the N-terminal section; belongs to the PMEI family. In the C-terminal section; belongs to the pectinesterase family. In terms of tissue distribution, expressed in siliques.

It localises to the secreted. The protein localises to the cell wall. The catalysed reaction is [(1-&gt;4)-alpha-D-galacturonosyl methyl ester](n) + n H2O = [(1-&gt;4)-alpha-D-galacturonosyl](n) + n methanol + n H(+). It participates in glycan metabolism; pectin degradation; 2-dehydro-3-deoxy-D-gluconate from pectin: step 1/5. Functionally, acts in the modification of cell walls via demethylesterification of cell wall pectin. The protein is Probable pectinesterase/pectinesterase inhibitor 7 (PME7) of Arabidopsis thaliana (Mouse-ear cress).